A 159-amino-acid chain; its full sequence is MRGPLSAWLVKHGLVHRSLGFDYQGIETLQIKPEDWHSIAVILYVYGYNYLRSQCAYDVAPGGLLASIYHLTRIEYGILDQPEEVCIKVFAPRKNPRIPSVFWVWKSADFQERESYDMLGISYDNHPRLKRILMPESWIGWPLRKDYIAPNFYEIQDAH.

It belongs to the complex I 30 kDa subunit family. NDH is composed of at least 16 different subunits, 5 of which are encoded in the nucleus.

The protein resides in the plastid. It is found in the chloroplast thylakoid membrane. It carries out the reaction a plastoquinone + NADH + (n+1) H(+)(in) = a plastoquinol + NAD(+) + n H(+)(out). It catalyses the reaction a plastoquinone + NADPH + (n+1) H(+)(in) = a plastoquinol + NADP(+) + n H(+)(out). Functionally, NDH shuttles electrons from NAD(P)H:plastoquinone, via FMN and iron-sulfur (Fe-S) centers, to quinones in the photosynthetic chain and possibly in a chloroplast respiratory chain. The immediate electron acceptor for the enzyme in this species is believed to be plastoquinone. Couples the redox reaction to proton translocation, and thus conserves the redox energy in a proton gradient. This chain is NAD(P)H-quinone oxidoreductase subunit J, chloroplastic, found in Populus trichocarpa (Western balsam poplar).